The chain runs to 245 residues: Adenosine 5'-phosphosulfate reductase (245 aa).

4 residues coordinate [4Fe-4S] cluster: Cys124, Cys125, Cys205, and Cys208. Cys231 serves as the catalytic Nucleophile; cysteine thiosulfonate intermediate.

The protein belongs to the PAPS reductase family. CysH subfamily. [4Fe-4S] cluster is required as a cofactor.

It localises to the cytoplasm. It carries out the reaction [thioredoxin]-disulfide + sulfite + AMP + 2 H(+) = adenosine 5'-phosphosulfate + [thioredoxin]-dithiol. It functions in the pathway sulfur metabolism; hydrogen sulfide biosynthesis; sulfite from sulfate. In terms of biological role, catalyzes the formation of sulfite from adenosine 5'-phosphosulfate (APS) using thioredoxin as an electron donor. The protein is Adenosine 5'-phosphosulfate reductase of Chelativorans sp. (strain BNC1).